The chain runs to 121 residues: Ribosome-binding factor A (121 aa).

It belongs to the RbfA family. In terms of assembly, monomer. Binds 30S ribosomal subunits, but not 50S ribosomal subunits or 70S ribosomes.

It is found in the cytoplasm. Functionally, one of several proteins that assist in the late maturation steps of the functional core of the 30S ribosomal subunit. Associates with free 30S ribosomal subunits (but not with 30S subunits that are part of 70S ribosomes or polysomes). Required for efficient processing of 16S rRNA. May interact with the 5'-terminal helix region of 16S rRNA. The sequence is that of Ribosome-binding factor A from Clostridium acetobutylicum (strain ATCC 824 / DSM 792 / JCM 1419 / IAM 19013 / LMG 5710 / NBRC 13948 / NRRL B-527 / VKM B-1787 / 2291 / W).